The following is a 202-amino-acid chain: MYSANGHFKKHWQNYVKTWFNQPARKTRRRIARQKKAVKISPRPTAGTLRPIVHGQTLKYNMKVRSGRGFSLEELKAAGIPKKLAPTIGIAVDHRRRNRSLEGLQTNVQRLEDLQGQLVVFPRRASRSRLVILPPRNCLTATQVHGAYMPIEREKHQLILSKVLKKMKSFNAYAKLRVERTNERHIGARMKRAAEAEKEEKK.

The protein belongs to the eukaryotic ribosomal protein eL13 family.

The protein is Large ribosomal subunit protein eL13 (RPL13) of Nicotiana tabacum (Common tobacco).